Reading from the N-terminus, the 126-residue chain is Small ribosomal subunit protein bS6 (126 aa).

The tract at residues 104–126 (QGAEKGKSSSKKVAAEAEASEEA) is disordered.

It belongs to the bacterial ribosomal protein bS6 family.

Binds together with bS18 to 16S ribosomal RNA. The chain is Small ribosomal subunit protein bS6 from Coxiella burnetii (strain Dugway 5J108-111).